A 250-amino-acid chain; its full sequence is Cytochrome c oxidase subunit 2 (250 aa).

Topologically, residues 1–39 (MFFLINKLVMNFDAPSPWGIYFQDSATPQMEGLNELHDN) are mitochondrial intermembrane. The helical transmembrane segment at 40–60 (IMYYLVVILFAVGWILLSIVI) threads the bilayer. Residues 61–81 (NYVSTKSPISHKYLNHGTLIE) lie on the Mitochondrial matrix side of the membrane. Residues 82 to 104 (LIWTITPAVILILIAFPSFKLLY) traverse the membrane as a helical segment. At 105–250 (LMDEVSDPSM…EKFLIWLKEQ (146 aa)) the chain is on the mitochondrial intermembrane side. Residues His185, Cys220, Glu222, Cys224, His228, and Met231 each contribute to the Cu cation site. Residue Glu222 participates in Mg(2+) binding.

Belongs to the cytochrome c oxidase subunit 2 family. As to quaternary structure, component of the cytochrome c oxidase (complex IV, CIV), a multisubunit enzyme composed of a catalytic core of 3 subunits and several supernumerary subunits. The complex exists as a monomer or a dimer and forms supercomplexes (SCs) in the inner mitochondrial membrane with ubiquinol-cytochrome c oxidoreductase (cytochrome b-c1 complex, complex III, CIII). Requires Cu cation as cofactor.

Its subcellular location is the mitochondrion inner membrane. It catalyses the reaction 4 Fe(II)-[cytochrome c] + O2 + 8 H(+)(in) = 4 Fe(III)-[cytochrome c] + 2 H2O + 4 H(+)(out). Functionally, component of the cytochrome c oxidase, the last enzyme in the mitochondrial electron transport chain which drives oxidative phosphorylation. The respiratory chain contains 3 multisubunit complexes succinate dehydrogenase (complex II, CII), ubiquinol-cytochrome c oxidoreductase (cytochrome b-c1 complex, complex III, CIII) and cytochrome c oxidase (complex IV, CIV), that cooperate to transfer electrons derived from NADH and succinate to molecular oxygen, creating an electrochemical gradient over the inner membrane that drives transmembrane transport and the ATP synthase. Cytochrome c oxidase is the component of the respiratory chain that catalyzes the reduction of oxygen to water. Electrons originating from reduced cytochrome c in the intermembrane space (IMS) are transferred via the dinuclear copper A center (CU(A)) of subunit 2 and heme A of subunit 1 to the active site in subunit 1, a binuclear center (BNC) formed by heme A3 and copper B (CU(B)). The BNC reduces molecular oxygen to 2 water molecules using 4 electrons from cytochrome c in the IMS and 4 protons from the mitochondrial matrix. This Podospora anserina (strain S / ATCC MYA-4624 / DSM 980 / FGSC 10383) (Pleurage anserina) protein is Cytochrome c oxidase subunit 2 (COII).